Consider the following 263-residue polypeptide: Tetraspanin-7 (263 aa).

The Cytoplasmic segment spans residues 1–7 (MVQCSNN). The helical transmembrane segment at 8–28 (LLGILNFFTFLLSIPILSAGI) threads the bilayer. Residues 29 to 45 (WLGKNAATECERFLDKP) lie on the Extracellular side of the membrane. The chain crosses the membrane as a helical span at residues 46–66 (MVVLGIFLMFVSIAGLVGACC). At 67-75 (RVSCLLWLY) the chain is on the cytoplasmic side. A helical transmembrane segment spans residues 76–96 (LFAMFLLILLGFCFTIFAFAV). Over 97–234 (TNRGAGEVIS…NIKNSWKKVA (138 aa)) the chain is Extracellular. An N-linked (GlcNAc...) asparagine glycan is attached at Asn-180. A helical transmembrane segment spans residues 235-255 (KVNIVFLIFLIIVYSVGCCAF). The Cytoplasmic segment spans residues 256–263 (RNNRKRSW).

Belongs to the tetraspanin (TM4SF) family.

The protein resides in the membrane. Its function is as follows. May be involved in the regulation of cell differentiation. In Arabidopsis thaliana (Mouse-ear cress), this protein is Tetraspanin-7 (TET7).